A 309-amino-acid polypeptide reads, in one-letter code: 2-phospho-L-lactate transferase (309 aa).

Residues Asp-50 and Lys-89 each contribute to the 7,8-didemethyl-8-hydroxy-5-deazariboflavin site.

It belongs to the CofD family. As to quaternary structure, homodimer. It depends on Mg(2+) as a cofactor.

It carries out the reaction (2S)-lactyl-2-diphospho-5'-guanosine + 7,8-didemethyl-8-hydroxy-5-deazariboflavin = oxidized coenzyme F420-0 + GMP + H(+). The protein operates within cofactor biosynthesis; coenzyme F420 biosynthesis. In terms of biological role, catalyzes the transfer of the 2-phospholactate moiety from (2S)-lactyl-2-diphospho-5'-guanosine to 7,8-didemethyl-8-hydroxy-5-deazariboflavin (FO) with the formation of oxidized coenzyme F420-0 and GMP. The protein is 2-phospho-L-lactate transferase of Methanococcus maripaludis (strain C7 / ATCC BAA-1331).